Here is a 255-residue protein sequence, read N- to C-terminus: Indole-3-glycerol phosphate synthase (255 aa).

Belongs to the TrpC family.

It catalyses the reaction 1-(2-carboxyphenylamino)-1-deoxy-D-ribulose 5-phosphate + H(+) = (1S,2R)-1-C-(indol-3-yl)glycerol 3-phosphate + CO2 + H2O. It functions in the pathway amino-acid biosynthesis; L-tryptophan biosynthesis; L-tryptophan from chorismate: step 4/5. This Streptococcus mutans serotype c (strain ATCC 700610 / UA159) protein is Indole-3-glycerol phosphate synthase.